Consider the following 215-residue polypeptide: Cytochrome b6 (215 aa).

A helical membrane pass occupies residues Ile-32 to Phe-52. Cys-35 serves as a coordination point for heme c. 2 residues coordinate heme b: His-86 and His-100. 3 helical membrane-spanning segments follow: residues Ala-90–Phe-110, Leu-116–Tyr-136, and Ala-186–Ile-206. Residues His-187 and His-202 each contribute to the heme b site.

Belongs to the cytochrome b family. PetB subfamily. The 4 large subunits of the cytochrome b6-f complex are cytochrome b6, subunit IV (17 kDa polypeptide, PetD), cytochrome f and the Rieske protein, while the 4 small subunits are PetG, PetL, PetM and PetN. The complex functions as a dimer. Heme b serves as cofactor. It depends on heme c as a cofactor.

It localises to the cellular thylakoid membrane. Its function is as follows. Component of the cytochrome b6-f complex, which mediates electron transfer between photosystem II (PSII) and photosystem I (PSI), cyclic electron flow around PSI, and state transitions. In Desmonostoc sp. (strain PCC 7906) (Nostoc sp. (strain PCC 7906)), this protein is Cytochrome b6.